The sequence spans 251 residues: Large ribosomal subunit protein uL16m (251 aa).

The N-terminal 29 residues, 1–29, are a transit peptide targeting the mitochondrion; that stretch reads MWRLLARASAPLLRVPLSDSWALLPASAG.

It belongs to the universal ribosomal protein uL16 family. In terms of assembly, component of the mitochondrial large ribosomal subunit (mt-LSU). Mature mammalian 55S mitochondrial ribosomes consist of a small (28S) and a large (39S) subunit. The 28S small subunit contains a 12S ribosomal RNA (12S mt-rRNA) and 30 different proteins. The 39S large subunit contains a 16S rRNA (16S mt-rRNA), a copy of mitochondrial valine transfer RNA (mt-tRNA(Val)), which plays an integral structural role, and 52 different proteins.

Its subcellular location is the mitochondrion. In Homo sapiens (Human), this protein is Large ribosomal subunit protein uL16m (MRPL16).